A 68-amino-acid chain; its full sequence is Conotoxin Eb11.7 (68 aa).

A signal peptide spans 1–26; sequence MMFRLTSVSCFLLVIVCLNLFQVVLT. Disulfide bonds link cysteine 29-cysteine 43, cysteine 36-cysteine 48, cysteine 42-cysteine 52, and cysteine 47-cysteine 56. Phenylalanine 60 carries the phenylalanine amide modification. Positions 64-68 are excised as a propeptide; it reads ATFQE.

Belongs to the conotoxin I2 superfamily. Expressed by the venom duct.

It is found in the secreted. In Conus eburneus (Ivory cone), this protein is Conotoxin Eb11.7.